A 222-amino-acid polypeptide reads, in one-letter code: MNLKHIKAVAFDLDGTLVDSIPDLANAANAMREHLGLPPLDPERIKSHVGDGIASLVHRAITDERHAEADGPLWERGYRFFVQRYREHLADHTTVYPGVRDGLGLLRALQLPLVMITNKSERLAVPLAEQLGLRDHFSLIVGGDTLPEKKPSALPLLHCCQVLGIQPQELAMVGDSANDVAAARAAGCAAIAVGYGYADASTLGADLTVNSIAELYDLMKNG.

Residue Asp12 is the Nucleophile of the active site. The Mg(2+) site is built by Asp12, Asp14, and Asp175.

The protein belongs to the HAD-like hydrolase superfamily. CbbY/CbbZ/Gph/YieH family. Mg(2+) serves as cofactor.

The catalysed reaction is 2-phosphoglycolate + H2O = glycolate + phosphate. Its pathway is organic acid metabolism; glycolate biosynthesis; glycolate from 2-phosphoglycolate: step 1/1. Functionally, specifically catalyzes the dephosphorylation of 2-phosphoglycolate. Is involved in the dissimilation of the intracellular 2-phosphoglycolate formed during the DNA repair of 3'-phosphoglycolate ends, a major class of DNA lesions induced by oxidative stress. The chain is Phosphoglycolate phosphatase from Chromobacterium violaceum (strain ATCC 12472 / DSM 30191 / JCM 1249 / CCUG 213 / NBRC 12614 / NCIMB 9131 / NCTC 9757 / MK).